We begin with the raw amino-acid sequence, 423 residues long: UDP-N-acetylglucosamine 1-carboxyvinyltransferase 1 (423 aa).

23–24 (KN) contacts phosphoenolpyruvate. Residue R96 participates in UDP-N-acetyl-alpha-D-glucosamine binding. The active-site Proton donor is C120. C120 carries the 2-(S-cysteinyl)pyruvic acid O-phosphothioketal modification. Residues D309 and V331 each coordinate UDP-N-acetyl-alpha-D-glucosamine.

Belongs to the EPSP synthase family. MurA subfamily.

The protein resides in the cytoplasm. It catalyses the reaction phosphoenolpyruvate + UDP-N-acetyl-alpha-D-glucosamine = UDP-N-acetyl-3-O-(1-carboxyvinyl)-alpha-D-glucosamine + phosphate. Its pathway is cell wall biogenesis; peptidoglycan biosynthesis. Functionally, cell wall formation. Adds enolpyruvyl to UDP-N-acetylglucosamine. In Streptococcus pyogenes serotype M3 (strain ATCC BAA-595 / MGAS315), this protein is UDP-N-acetylglucosamine 1-carboxyvinyltransferase 1.